A 201-amino-acid polypeptide reads, in one-letter code: Large ribosomal subunit protein bL25 (201 aa).

The interval Ala181–Glu201 is disordered. Residues Ser185–Thr194 show a composition bias toward acidic residues.

It belongs to the bacterial ribosomal protein bL25 family. CTC subfamily. In terms of assembly, part of the 50S ribosomal subunit; part of the 5S rRNA/L5/L18/L25 subcomplex. Contacts the 5S rRNA. Binds to the 5S rRNA independently of L5 and L18.

This is one of the proteins that binds to the 5S RNA in the ribosome where it forms part of the central protuberance. In Thermoanaerobacter pseudethanolicus (strain ATCC 33223 / 39E) (Clostridium thermohydrosulfuricum), this protein is Large ribosomal subunit protein bL25.